A 154-amino-acid polypeptide reads, in one-letter code: Endoribonuclease YbeY (154 aa).

The Zn(2+) site is built by H113, H117, and H123.

It belongs to the endoribonuclease YbeY family. Zn(2+) serves as cofactor.

The protein resides in the cytoplasm. Single strand-specific metallo-endoribonuclease involved in late-stage 70S ribosome quality control and in maturation of the 3' terminus of the 16S rRNA. The chain is Endoribonuclease YbeY from Anaplasma marginale (strain Florida).